The chain runs to 229 residues: uncharacterized protein (229 aa).

This is an uncharacterized protein from Ureaplasma parvum serovar 3 (strain ATCC 700970).